The primary structure comprises 148 residues: MALYEHVLLARQDISQQQVDALVEQFKGVLEANGGKFGKVENWGLRPLTYRIKKNRKAYYTLVNIDAPAAAVAEMERQMRINEDVLSFLTVRVEEHEEGQSAMLTRRDDRRERDGDDRPRRREGGFDRGDRGDRGPRRPRDNEAGEGA.

Residues 96–148 form a disordered region; that stretch reads HEEGQSAMLTRRDDRRERDGDDRPRRREGGFDRGDRGDRGPRRPRDNEAGEGA.

It belongs to the bacterial ribosomal protein bS6 family.

Functionally, binds together with bS18 to 16S ribosomal RNA. This chain is Small ribosomal subunit protein bS6, found in Brucella melitensis biotype 1 (strain ATCC 23456 / CCUG 17765 / NCTC 10094 / 16M).